Here is a 114-residue protein sequence, read N- to C-terminus: Large ribosomal subunit protein bL19 (114 aa).

The protein belongs to the bacterial ribosomal protein bL19 family.

This protein is located at the 30S-50S ribosomal subunit interface and may play a role in the structure and function of the aminoacyl-tRNA binding site. This Clostridium acetobutylicum (strain ATCC 824 / DSM 792 / JCM 1419 / IAM 19013 / LMG 5710 / NBRC 13948 / NRRL B-527 / VKM B-1787 / 2291 / W) protein is Large ribosomal subunit protein bL19.